The following is a 363-amino-acid chain: Phospho-N-acetylmuramoyl-pentapeptide-transferase (363 aa).

The next 10 helical transmembrane spans lie at 3–23, 48–68, 83–103, 121–141, 159–179, 192–212, 234–254, 261–281, 286–306, and 340–360; these read QILF…PLLI, GTPT…YFLA, PTFS…VGFL, AKMI…LQFA, FGWT…ILAM, LATG…VWQF, PLDL…FLWW, IFMG…LAIC, LLMA…VIQV, and FWII…AGWA.

Belongs to the glycosyltransferase 4 family. MraY subfamily. Requires Mg(2+) as cofactor.

It is found in the cell membrane. The catalysed reaction is UDP-N-acetyl-alpha-D-muramoyl-L-alanyl-gamma-D-glutamyl-meso-2,6-diaminopimeloyl-D-alanyl-D-alanine + di-trans,octa-cis-undecaprenyl phosphate = di-trans,octa-cis-undecaprenyl diphospho-N-acetyl-alpha-D-muramoyl-L-alanyl-D-glutamyl-meso-2,6-diaminopimeloyl-D-alanyl-D-alanine + UMP. It functions in the pathway cell wall biogenesis; peptidoglycan biosynthesis. Its function is as follows. Catalyzes the initial step of the lipid cycle reactions in the biosynthesis of the cell wall peptidoglycan: transfers peptidoglycan precursor phospho-MurNAc-pentapeptide from UDP-MurNAc-pentapeptide onto the lipid carrier undecaprenyl phosphate, yielding undecaprenyl-pyrophosphoryl-MurNAc-pentapeptide, known as lipid I. In Streptomyces coelicolor (strain ATCC BAA-471 / A3(2) / M145), this protein is Phospho-N-acetylmuramoyl-pentapeptide-transferase.